A 326-amino-acid chain; its full sequence is Vacuolar protein sorting-associated protein 26A-B (326 aa).

The protein belongs to the VPS26 family. As to quaternary structure, component of the heterotrimeric retromer cargo-selective complex (CSC) which is believed to associate with variable sorting nexins to form functionally distinct retromer complex variants.

The protein resides in the cytoplasm. The protein localises to the endosome membrane. It is found in the early endosome. Functionally, acts as a component of the retromer cargo-selective complex (CSC). The CSC is believed to be the core functional component of retromer or respective retromer complex variants acting to prevent missorting of selected transmembrane cargo proteins into the lysosomal degradation pathway. Retromer mediates retrograde transport of cargo proteins from endosomes to the trans-Golgi network (TGN). The protein is Vacuolar protein sorting-associated protein 26A-B (vps26a-b) of Xenopus laevis (African clawed frog).